The primary structure comprises 410 residues: Serine proteinase inhibitor A3K (410 aa).

A signal peptide spans 1–24 (MPSAISRGLLLLAGLCYLVFGIMA). Residues asparagine 62, asparagine 99, asparagine 162, asparagine 229, and asparagine 263 are each glycosylated (N-linked (GlcNAc...) asparagine). An RCL region spans residues 360–381 (GTEAAAATVLEATRTARPPRLS).

This sequence belongs to the serpin family.

The protein localises to the secreted. It is found in the extracellular space. In terms of biological role, contrapsin inhibits trypsin-like proteases. This chain is Serine proteinase inhibitor A3K (SERPINA3K), found in Cavia porcellus (Guinea pig).